Here is a 388-residue protein sequence, read N- to C-terminus: MSDLAHTAVELCRELLRRPSVTPLDAGAQDFLAAKLREAGFATHSVVFSDESTPDIQNLYARAGAGGRHLVFAGHTDVVPPGDSASWRFDPFGGEMEGGLIFGRGAVDMKGAIAAFAAAAMAFVAEGGAQKGSISFLITGDEEGPAINGTDKLLRWAHQRGERFDHCILGEPTNQQALGDMIKIGRRGSLNGTLTVKGVQGHVAYPHRAKNPIPHLMRLLAALTAEPLDQGTELFDASNLEIVSVDVGNPTFNVIPAEARARFNIRFNDIWTPDALAAELRARAEKAGAAAGAASALHFEPCNALAFVTQPDAFTDLVSAAIEQATGRKPKLSTSGGTSDARFIRAYCPVLEFGLVGSTMHAVDERAPVEDISALASIYADILNSYFK.

Histidine 75 is a Zn(2+) binding site. Aspartate 77 is an active-site residue. Aspartate 108 contacts Zn(2+). Glutamate 142 acts as the Proton acceptor in catalysis. Glutamate 143, glutamate 171, and histidine 361 together coordinate Zn(2+).

Belongs to the peptidase M20A family. DapE subfamily. In terms of assembly, homodimer. It depends on Zn(2+) as a cofactor. The cofactor is Co(2+).

It catalyses the reaction N-succinyl-(2S,6S)-2,6-diaminopimelate + H2O = (2S,6S)-2,6-diaminopimelate + succinate. It participates in amino-acid biosynthesis; L-lysine biosynthesis via DAP pathway; LL-2,6-diaminopimelate from (S)-tetrahydrodipicolinate (succinylase route): step 3/3. In terms of biological role, catalyzes the hydrolysis of N-succinyl-L,L-diaminopimelic acid (SDAP), forming succinate and LL-2,6-diaminopimelate (DAP), an intermediate involved in the bacterial biosynthesis of lysine and meso-diaminopimelic acid, an essential component of bacterial cell walls. The protein is Succinyl-diaminopimelate desuccinylase of Methylocella silvestris (strain DSM 15510 / CIP 108128 / LMG 27833 / NCIMB 13906 / BL2).